A 611-amino-acid chain; its full sequence is Urease subunit alpha 2 (611 aa).

A Urease domain is found at 154 to 611 (GGIDSHIHFI…LPMAQRYFLF (458 aa)). Ni(2+)-binding residues include His159, His161, and Lys242. Lys242 carries the N6-carboxylysine modification. His244 lines the substrate pocket. Residues His271 and His297 each coordinate Ni(2+). Catalysis depends on His345, which acts as the Proton donor. Asp385 contacts Ni(2+). Positions 411 to 434 (GHLAPDQSAKTEQSLDNIMLSPTD) are disordered. Residues 418 to 434 (SAKTEQSLDNIMLSPTD) show a composition bias toward polar residues.

This sequence belongs to the metallo-dependent hydrolases superfamily. Urease alpha subunit family. Heterotrimer of UreA (gamma), UreB (beta) and UreC (alpha) subunits. Three heterotrimers associate to form the active enzyme. It depends on Ni cation as a cofactor. Carboxylation allows a single lysine to coordinate two nickel ions.

It localises to the cytoplasm. It catalyses the reaction urea + 2 H2O + H(+) = hydrogencarbonate + 2 NH4(+). It participates in nitrogen metabolism; urea degradation; CO(2) and NH(3) from urea (urease route): step 1/1. The sequence is that of Urease subunit alpha 2 from Psychrobacter cryohalolentis (strain ATCC BAA-1226 / DSM 17306 / VKM B-2378 / K5).